We begin with the raw amino-acid sequence, 357 residues long: Neutral protease 2 homolog UREG_02006 (357 aa).

The signal sequence occupies residues 1-19; sequence MLFSSRFLALAALLGQALA. Positions 20-179 are excised as a propeptide; the sequence is LPIDDFSQSD…QSAVPTIEKR (160 aa). 2 disulfide bridges follow: Cys187–Cys259 and Cys266–Cys284. His308 contributes to the Zn(2+) binding site. Residue Glu309 is part of the active site. Zn(2+) is bound by residues His312 and Asp323.

It belongs to the peptidase M35 family. Zn(2+) serves as cofactor.

The protein localises to the secreted. It catalyses the reaction Preferential cleavage of bonds with hydrophobic residues in P1'. Also 3-Asn-|-Gln-4 and 8-Gly-|-Ser-9 bonds in insulin B chain.. In terms of biological role, secreted metalloproteinase that allows assimilation of proteinaceous substrates. Shows high activities on basic nuclear substrates such as histone and protamine. This Uncinocarpus reesii (strain UAMH 1704) protein is Neutral protease 2 homolog UREG_02006.